Consider the following 331-residue polypeptide: Smad-related protein daf-14 (331 aa).

The MH2 domain occupies 134–331; sequence WCTIFYYELT…NERPEIGSRS (198 aa). The interval 168–187 is disordered; it reads ECRMSLTSQPSSRNSKSSQI. Residues 175–185 show a composition bias toward low complexity; the sequence is SQPSSRNSKSS.

Interacts with R-SMAD daf-8 and co-SMAD daf-3. Interacts with daf-3 in a daf-8 dependent manner.

Probably an atypical receptor-regulated SMAD (R-SMAD) that is an intracellular signal transducer and transcriptional modulator activated by TGF-beta-like daf-7 signaling. Plays a role in TGF-beta-like daf-7 signaling in regulating entry into a developmentally arrested larval state known as dauer, in response to harsh environmental conditions; partially redundant with R-SMAD daf-8. The chain is Smad-related protein daf-14 from Caenorhabditis elegans.